Consider the following 153-residue polypeptide: Ribosome maturation factor RimP (153 aa).

It belongs to the RimP family.

The protein resides in the cytoplasm. Required for maturation of 30S ribosomal subunits. The chain is Ribosome maturation factor RimP from Nostoc punctiforme (strain ATCC 29133 / PCC 73102).